A 355-amino-acid chain; its full sequence is Putative inositol monophosphatase 3 (355 aa).

The helical transmembrane segment at 16–36 threads the bilayer; the sequence is LPATIVAILLTFVLVYFLNFH. The Mg(2+) site is built by glutamate 127, aspartate 167, leucine 169, aspartate 170, and aspartate 292. A substrate-binding site is contributed by glutamate 127. Substrate-binding positions include 169 to 172 and aspartate 292; that span reads LDAT.

This sequence belongs to the inositol monophosphatase superfamily. Mg(2+) is required as a cofactor.

The protein localises to the membrane. The enzyme catalyses a myo-inositol phosphate + H2O = myo-inositol + phosphate. It participates in polyol metabolism; myo-inositol biosynthesis; myo-inositol from D-glucose 6-phosphate: step 2/2. This is Putative inositol monophosphatase 3 from Drosophila melanogaster (Fruit fly).